Reading from the N-terminus, the 869-residue chain is Protein translocase subunit SecA (869 aa).

Residues Q88, 106–110, and D509 each bind ATP; that span reads GEGKT. Positions 818 to 840 are enriched in basic and acidic residues; sequence QDEGLKFNQREGEDAPAVREKKI. The segment at 818–869 is disordered; the sequence is QDEGLKFNQREGEDAPAVREKKIPRNSPCPCGSGKKYKDCCGKSGPKKGILA. Residues C846, C848, C857, and C858 each contribute to the Zn(2+) site.

Belongs to the SecA family. As to quaternary structure, monomer and homodimer. Part of the essential Sec protein translocation apparatus which comprises SecA, SecYEG and auxiliary proteins SecDF-YajC and YidC. Zn(2+) serves as cofactor.

The protein resides in the cell inner membrane. The protein localises to the cytoplasm. The catalysed reaction is ATP + H2O + cellular proteinSide 1 = ADP + phosphate + cellular proteinSide 2.. Functionally, part of the Sec protein translocase complex. Interacts with the SecYEG preprotein conducting channel. Has a central role in coupling the hydrolysis of ATP to the transfer of proteins into and across the cell membrane, serving as an ATP-driven molecular motor driving the stepwise translocation of polypeptide chains across the membrane. In Campylobacter curvus (strain 525.92), this protein is Protein translocase subunit SecA.